The chain runs to 512 residues: Opioid growth factor receptor-like protein 1 (512 aa).

Disordered stretches follow at residues M1–T72, I323–K469, and S488–T512. Composition is skewed to acidic residues over residues G28–E54 and T62–G71. Basic and acidic residues predominate over residues D328–A337. Positions Q347 to K361 are enriched in basic residues. A compositionally biased stretch (polar residues) spans T408–T421. Over residues R449–C468 the composition is skewed to basic and acidic residues. Polar residues predominate over residues S490–T499.

The protein belongs to the opioid growth factor receptor family.

This Xenopus tropicalis (Western clawed frog) protein is Opioid growth factor receptor-like protein 1 (ogfrl1).